The sequence spans 260 residues: Mitochondrial import inner membrane translocase subunit Tim29 (260 aa).

Residues 1-31 constitute a mitochondrion transit peptide; sequence MAAAALRRFWSRRRAEAGDAVVAKPGVWARL. At 32 to 59 the chain is on the mitochondrial matrix side; it reads GSWARALLRDYAEACRDASAEARARPGR. The chain crosses the membrane as a helical span at residues 60–77; sequence AAVYVGLLGGAAACFTLA. At 78-260 the chain is on the mitochondrial intermembrane side; the sequence is PSEGAFEEAL…HSLVQAEAPR (183 aa).

Component of the TIM22 complex, which core is composed of TIMM22, associated with TIMM10 (TIMM10A and/or TIMM10B), TIMM9, AGK and TIMM29. Interacts with TIMM10B; the interaction is direct. Interacts with TOMM40; linking the TIM22 complex to the TOM complex. Interacts with TIMM22 (when oxidized); the interaction is direct.

The protein localises to the mitochondrion inner membrane. Component of the TIM22 complex, a complex that mediates the import and insertion of multi-pass transmembrane proteins into the mitochondrial inner membrane. The TIM22 complex forms a twin-pore translocase that uses the membrane potential as the external driving force. Required for the stability of the TIM22 complex and functions in the assembly of the TIMM22 protein into the TIM22 complex. May facilitate cooperation between TIM22 and TOM complexes by interacting with TOMM40. This is Mitochondrial import inner membrane translocase subunit Tim29 from Homo sapiens (Human).